The chain runs to 264 residues: MFLIDSHCHLDRLNYNLPLENIEDVLKKSYQNHVKNFLTVSTCISNFYNIKKLFKKYNTIFYSCGVHPLNCKKELNLFHTIENLSNEIKKLSCIKDVIALGETGLDYYYSSDTKKIQQDFFREHIRVAIKLKKPIIVHSRNASEDTIKILQEENAEKCKGVLHSFTGDYNTACKLLDLGFYISCSGIITFKNSLELCKTIRKIPLNRLLIETDSPYLSPAPYRGKGNQPAYLFYIAEYLSILKEIDIHALGHITTSNFRTLFNI.

The a divalent metal cation site is built by histidine 7, histidine 9, glutamate 102, histidine 138, histidine 163, and aspartate 213.

The protein belongs to the metallo-dependent hydrolases superfamily. TatD-type hydrolase family. A divalent metal cation serves as cofactor.

This is an uncharacterized protein from Buchnera aphidicola subsp. Acyrthosiphon pisum (strain APS) (Acyrthosiphon pisum symbiotic bacterium).